The sequence spans 314 residues: 2,3-dihydroxyphenylpropionate/2,3-dihydroxicinnamic acid 1,2-dioxygenase (314 aa).

The Proton donor role is filled by His115. Catalysis depends on His179, which acts as the Proton acceptor.

This sequence belongs to the LigB/MhpB extradiol dioxygenase family. In terms of assembly, homotetramer. It depends on Fe(2+) as a cofactor.

The catalysed reaction is 3-(2,3-dihydroxyphenyl)propanoate + O2 = (2Z,4E)-2-hydroxy-6-oxonona-2,4-dienedioate + H(+). The enzyme catalyses (2E)-3-(2,3-dihydroxyphenyl)prop-2-enoate + O2 = (2Z,4E,7E)-2-hydroxy-6-oxonona-2,4,7-trienedioate + H(+). It functions in the pathway aromatic compound metabolism; 3-phenylpropanoate degradation. Functionally, catalyzes the non-heme iron(II)-dependent oxidative cleavage of 2,3-dihydroxyphenylpropionic acid and 2,3-dihydroxicinnamic acid into 2-hydroxy-6-ketononadienedioate and 2-hydroxy-6-ketononatrienedioate, respectively. This Escherichia coli O81 (strain ED1a) protein is 2,3-dihydroxyphenylpropionate/2,3-dihydroxicinnamic acid 1,2-dioxygenase.